A 356-amino-acid polypeptide reads, in one-letter code: Phosphoribosylformylglycinamidine cyclo-ligase (356 aa).

This sequence belongs to the AIR synthase family.

The protein localises to the cytoplasm. The catalysed reaction is 2-formamido-N(1)-(5-O-phospho-beta-D-ribosyl)acetamidine + ATP = 5-amino-1-(5-phospho-beta-D-ribosyl)imidazole + ADP + phosphate + H(+). It participates in purine metabolism; IMP biosynthesis via de novo pathway; 5-amino-1-(5-phospho-D-ribosyl)imidazole from N(2)-formyl-N(1)-(5-phospho-D-ribosyl)glycinamide: step 2/2. The chain is Phosphoribosylformylglycinamidine cyclo-ligase from Sinorhizobium medicae (strain WSM419) (Ensifer medicae).